A 370-amino-acid chain; its full sequence is Cytochrome b (370 aa).

A run of 4 helical transmembrane segments spans residues 25–45, 69–90, 105–125, and 170–190; these read FGSM…FLAV, WMMQ…YIHI, WLSG…GYVL, and FFAL…LHVM. Residues His-75 and His-89 each coordinate heme b. Heme b contacts are provided by His-174 and His-188. His-193 lines the a ubiquinone pocket. A run of 4 helical transmembrane segments spans residues 218–238, 280–300, 312–332, and 339–358; these read YKDL…ISFY, LGGA…PFTH, FMQL…WTAT, and FTMI…ISNP.

The protein belongs to the cytochrome b family. In terms of assembly, the cytochrome bc1 complex contains 3 respiratory subunits (MT-CYB, CYC1 and UQCRFS1), 2 core proteins (UQCRC1 and UQCRC2) and probably 6 low-molecular weight proteins. Heme b serves as cofactor.

It is found in the mitochondrion inner membrane. Its function is as follows. Component of the ubiquinol-cytochrome c reductase complex (complex III or cytochrome b-c1 complex) that is part of the mitochondrial respiratory chain. The b-c1 complex mediates electron transfer from ubiquinol to cytochrome c. Contributes to the generation of a proton gradient across the mitochondrial membrane that is then used for ATP synthesis. This is Cytochrome b (MT-CYB) from Corallus hortulanus enydris (Garden tree boa).